The sequence spans 152 residues: Prostaglandin E synthase (152 aa).

At 1–12 (MPAHSLVMSSPA) the chain is on the lumenal side. Residues 13-41 (LPAFLLCSTLLVIKMYVVAIITGQVRLRK) traverse the membrane as a helical segment. Residue Arg-38 participates in glutathione binding. Topologically, residues 42-60 (KAFANPEDALRHGGPQYCR) are cytoplasmic. A helical transmembrane segment spans residues 61–90 (SDPDVERCLRAHRNDMETIYPFLFLGFVYS). Position 73–77 (73–77 (RNDME)) interacts with glutathione. Residues 91 to 95 (FLGPN) lie on the Lumenal side of the membrane. Residues 96 to 119 (PFVAWMHFLVFLVGRVAHTVAYLG) form a helical membrane-spanning segment. 2 residues coordinate glutathione: His-113 and Tyr-117. The Cytoplasmic segment spans residues 120 to 123 (KLRA). Residues 124–152 (PIRSVTYTLAQLPCASMALQILWEAARHL) traverse the membrane as a helical segment. Residue 126–130 (RSVTY) participates in glutathione binding.

The protein belongs to the MAPEG family. As to quaternary structure, homotrimer. Glutathione serves as cofactor.

It is found in the membrane. The protein resides in the cytoplasm. Its subcellular location is the perinuclear region. It catalyses the reaction prostaglandin H2 = prostaglandin E2. It carries out the reaction 2-glyceryl-prostaglandin H2 = 2-glyceryl-prostaglandin E2. The catalysed reaction is prostaglandin G2 = (15S)-15-hydroperoxy-prostaglandin E2. The enzyme catalyses 1-chloro-2,4-dinitrobenzene + glutathione = 2,4-dinitrophenyl-S-glutathione + chloride + H(+). It catalyses the reaction (5S)-hydroperoxy-(6E,8Z,11Z,14Z)-eicosatetraenoate + 2 glutathione = (5S)-hydroxy-(6E,8Z,11Z,14Z)-eicosatetraenoate + glutathione disulfide + H2O. Its pathway is lipid metabolism; prostaglandin biosynthesis. Induced by interleukin IL1B. Its function is as follows. Terminal enzyme of the cyclooxygenase (COX)-2-mediated prostaglandin E2 (PGE2) biosynthetic pathway. Catalyzes the glutathione-dependent oxidoreduction of prostaglandin endoperoxide H2 (PGH2) to prostaglandin E2 (PGE2) in response to inflammatory stimuli. Plays a key role in inflammation response, fever and pain. Also catalyzes the oxidoreduction of endocannabinoids into prostaglandin glycerol esters and PGG2 into 15-hydroperoxy-PGE2. In addition, displays low glutathione transferase and glutathione-dependent peroxidase activities, toward 1-chloro-2,4-dinitrobenzene and 5-hydroperoxyicosatetraenoic acid (5-HPETE), respectively. The sequence is that of Prostaglandin E synthase (PTGES) from Homo sapiens (Human).